The sequence spans 172 residues: Pre-intermoult gene 1 protein (172 aa).

Positions Met1 to Ser22 are cleaved as a signal peptide. Positions Thr25 to Glu45 are enriched in acidic residues. Residues Thr25–Gly172 form a disordered region. 3 repeat units span residues Ser27–Asp32, Ser33–Asp38, and Ser39–Asp44. The tract at residues Ser27 to Asp44 is 3 X 6 AA tandem repeats of S-S-A-D-S-D. Residues Thr55–Ser77 show a composition bias toward low complexity. Acidic residues predominate over residues Asp78–Tyr95. Residues Val104 to Gly172 show a composition bias toward basic residues.

Low expression in first to third instar larvae salivary glands.

The sequence is that of Pre-intermoult gene 1 protein (Pig1) from Drosophila melanogaster (Fruit fly).